Here is a 345-residue protein sequence, read N- to C-terminus: Phosphoribosylformylglycinamidine cyclo-ligase (345 aa).

The protein belongs to the AIR synthase family.

The protein localises to the cytoplasm. The enzyme catalyses 2-formamido-N(1)-(5-O-phospho-beta-D-ribosyl)acetamidine + ATP = 5-amino-1-(5-phospho-beta-D-ribosyl)imidazole + ADP + phosphate + H(+). Its pathway is purine metabolism; IMP biosynthesis via de novo pathway; 5-amino-1-(5-phospho-D-ribosyl)imidazole from N(2)-formyl-N(1)-(5-phospho-D-ribosyl)glycinamide: step 2/2. The polypeptide is Phosphoribosylformylglycinamidine cyclo-ligase (Escherichia coli (strain SE11)).